The following is a 177-amino-acid chain: B9 domain-containing protein 2 (177 aa).

In terms of domain architecture, C2 B9-type spans 2 to 118 (AEVHIIGQIL…EIGTWKVAPN (117 aa)).

It belongs to the B9D family. As to quaternary structure, probable component of the tectonic-like complex (also named MKS complex), composed of B9d1, B9d2, Cc2d2a, Mks1 and tctn. As to expression, expressed in chordotonal neurons in the antennae (at protein level). Expressed in spermatids (at protein level).

It localises to the cytoplasm. It is found in the cytoskeleton. The protein localises to the cilium basal body. Functionally, probable component of the tectonic-like complex (also named MKS complex), a complex localized at the transition zone of primary cilia. Has a role in ciliary structure and function. The protein is B9 domain-containing protein 2 of Drosophila melanogaster (Fruit fly).